We begin with the raw amino-acid sequence, 251 residues long: MTDFTNSEKATNYQAVGEFNRTFGHPANTVFQHKIFDENPQTVKLRLDLIKEEVGELVDAVNENNLKEILDACGDILYVVYGMGQVFGINLDHKGPLESIEKPGYPKFSRNYSVNKNVFTESYQDVKKLVDKISDTYNCLDLSVAEKNIGDVSYHLYTILTFVYELSDLVGFDLDEVFDRVHRSNMSKLCLNEQEAVETIEHYKTLPGFESVIVKYRLAVDNKRYVIYNAESGKILKSKYFKLPNFSDLLE.

This is an uncharacterized protein from Acanthamoeba polyphaga mimivirus (APMV).